A 154-amino-acid chain; its full sequence is Nuclear cap-binding protein subunit 2-A (154 aa).

Residues tyrosine 10, tyrosine 33, 102 to 106 (RVDWD), 113 to 117 (RQYGR), and 123 to 124 (QV) each bind mRNA. One can recognise an RRM domain in the interval 30-108 (STLYVGNLSF…RLIRVDWDAG (79 aa)).

The protein belongs to the RRM NCBP2 family. As to quaternary structure, component of the nuclear cap-binding complex (CBC), a heterodimer composed of Cbp80 and Cbp20 that interacts with m7GpppG-capped RNA. Interacts with Ars2.

The protein resides in the nucleus. Component of the cap-binding complex (CBC), which binds co-transcriptionally to the 5' cap of pre-mRNAs and is involved in various processes such as pre-mRNA splicing and RNA-mediated gene silencing (RNAi). The CBC complex is involved in miRNA-mediated RNA interference via its interaction with Ars2 and is required for primary microRNAs (miRNAs) processing. Also involved in innate immunity via the short interfering RNAs (siRNAs) processing machinery by restricting the viral RNA production. In the CBC complex, Cbp20 recognizes and binds capped RNAs (m7GpppG-capped RNA) but requires Cbp80 to stabilize the movement of its N-terminal loop and lock the CBC into a high affinity cap-binding state with the cap structure. In Drosophila virilis (Fruit fly), this protein is Nuclear cap-binding protein subunit 2-A (Cbp20-A).